The following is a 434-amino-acid chain: Histidinol dehydrogenase (434 aa).

The NAD(+) site is built by Tyr130, Gln188, and Asn211. Positions 237, 259, and 262 each coordinate substrate. 2 residues coordinate Zn(2+): Gln259 and His262. Active-site proton acceptor residues include Glu326 and His327. Residues His327, Asp360, Glu414, and His419 each contribute to the substrate site. Asp360 is a Zn(2+) binding site. Residue His419 coordinates Zn(2+).

This sequence belongs to the histidinol dehydrogenase family. Homodimer. Requires Zn(2+) as cofactor.

The enzyme catalyses L-histidinol + 2 NAD(+) + H2O = L-histidine + 2 NADH + 3 H(+). The protein operates within amino-acid biosynthesis; L-histidine biosynthesis; L-histidine from 5-phospho-alpha-D-ribose 1-diphosphate: step 9/9. Its function is as follows. Catalyzes the sequential NAD-dependent oxidations of L-histidinol to L-histidinaldehyde and then to L-histidine. The chain is Histidinol dehydrogenase from Escherichia coli O6:H1 (strain CFT073 / ATCC 700928 / UPEC).